A 134-amino-acid polypeptide reads, in one-letter code: Cytochrome b (134 aa).

3 helical membrane passes run 33-53 (FGSL…FLAM), 77-98 (WLLR…YLHV), and 113-133 (WNIG…GYVL). 2 residues coordinate heme b: His83 and His97.

It belongs to the cytochrome b family. The cytochrome bc1 complex contains 11 subunits: 3 respiratory subunits (MT-CYB, CYC1 and UQCRFS1), 2 core proteins (UQCRC1 and UQCRC2) and 6 low-molecular weight proteins (UQCRH/QCR6, UQCRB/QCR7, UQCRQ/QCR8, UQCR10/QCR9, UQCR11/QCR10 and a cleavage product of UQCRFS1). This cytochrome bc1 complex then forms a dimer. Requires heme b as cofactor.

It is found in the mitochondrion inner membrane. In terms of biological role, component of the ubiquinol-cytochrome c reductase complex (complex III or cytochrome b-c1 complex) that is part of the mitochondrial respiratory chain. The b-c1 complex mediates electron transfer from ubiquinol to cytochrome c. Contributes to the generation of a proton gradient across the mitochondrial membrane that is then used for ATP synthesis. This is Cytochrome b (MT-CYB) from Chiroderma salvini (Salvin's big-eyed bat).